A 205-amino-acid chain; its full sequence is Inosine triphosphate pyrophosphatase (205 aa).

Residue 20–25 (TGNAKK) coordinates ITP. Glu-48 lines the Mg(2+) pocket. ITP contacts are provided by residues Lys-60, 76–77 (DT), Lys-93, 152–155 (FGWD), Lys-175, and 180–181 (HR).

Belongs to the HAM1 NTPase family. Homodimer. It depends on Mg(2+) as a cofactor. Requires Mn(2+) as cofactor.

It is found in the cytoplasm. It carries out the reaction ITP + H2O = IMP + diphosphate + H(+). It catalyses the reaction dITP + H2O = dIMP + diphosphate + H(+). The enzyme catalyses XTP + H2O = XMP + diphosphate + H(+). In terms of biological role, pyrophosphatase that hydrolyzes non-canonical purine nucleotides such as inosine triphosphate (ITP), deoxyinosine triphosphate (dITP) or xanthosine 5'-triphosphate (XTP) to their respective monophosphate derivatives. The enzyme does not distinguish between the deoxy- and ribose forms. Probably excludes non-canonical purines from RNA and DNA precursor pools, thus preventing their incorporation into RNA and DNA and avoiding chromosomal lesions. The sequence is that of Inosine triphosphate pyrophosphatase from Oryza sativa subsp. japonica (Rice).